The sequence spans 645 residues: MSVSANISVEAPIESQIQEIAYDGTEIYQLPPTLSEHLAKCAAKIDFSKTVNDLDLVKQSIKKEDEKKDDDSKDAAAHFQSSLWPWDSVRNKLKDAFTEVCVLSDVLAIAKEKRFMVLDPIPQEPPEVKQMVQVYARKKALASAANILLTGAERLKTAHTDQGGNRSAPDFHIELLRLRRNWRLKKVSNTIIGDLSYRTAGSKFMHPGMFEVTKAEDEDNNDENASAAAGTIATTGTAPEPKLTSLKVNVPTELQGVAFIKVITQKDQGDLCTATLNMMGSTQLFPQAGEWQKTLDFAQNVLFCKELFNQLAREAVQLQAPIPHVVVGNQIRATLLPGIQLVISLCHSTSSDSNNSSEPIKDHDHVLEHSLHQLLREFHHKNTHHPFPHPASAPLGPSKKRMLAGPSAFDRYELLEMTKSQTLLEQIIAQAQHIFTRRRAQYVLDTLAREVKDPQITSHWNAMNSPTMSCVKINITSHGYDANLRTSLVIHVKERSLKCICRDGRIMHMSYEMQELRDLILYQISQHQIVCLQSLAKCMAWQILSNSSHLGIGSVEPLGNASSCVLASPNSDRLIAVQVRCDPQLDVKVYIAQSPGKDFFPGSLVQGRHWEHLGGHFKELRFDKMEGKNFHNKMEFLMASLTSQT.

It belongs to the Mediator complex subunit 17 family. In terms of assembly, component of the Mediator complex.

Its subcellular location is the nucleus. In terms of biological role, component of the Mediator complex, a coactivator involved in the regulated transcription of nearly all RNA polymerase II-dependent genes. Mediator functions as a bridge to convey information from gene-specific regulatory proteins to the basal RNA polymerase II transcription machinery. Mediator is recruited to promoters by direct interactions with regulatory proteins and serves as a scaffold for the assembly of a functional preinitiation complex with RNA polymerase II and the general transcription factors. The chain is Mediator of RNA polymerase II transcription subunit 17 (MED17) from Aedes aegypti (Yellowfever mosquito).